Here is a 361-residue protein sequence, read N- to C-terminus: Chorismate synthase (361 aa).

2 residues coordinate NADP(+): Arg-48 and Arg-54. FMN contacts are provided by residues 125 to 127 (RSS), 238 to 239 (NA), Gly-278, 293 to 297 (KPTSS), and Arg-319.

It belongs to the chorismate synthase family. In terms of assembly, homotetramer. The cofactor is FMNH2.

It catalyses the reaction 5-O-(1-carboxyvinyl)-3-phosphoshikimate = chorismate + phosphate. The protein operates within metabolic intermediate biosynthesis; chorismate biosynthesis; chorismate from D-erythrose 4-phosphate and phosphoenolpyruvate: step 7/7. In terms of biological role, catalyzes the anti-1,4-elimination of the C-3 phosphate and the C-6 proR hydrogen from 5-enolpyruvylshikimate-3-phosphate (EPSP) to yield chorismate, which is the branch point compound that serves as the starting substrate for the three terminal pathways of aromatic amino acid biosynthesis. This reaction introduces a second double bond into the aromatic ring system. In Escherichia coli (strain K12 / MC4100 / BW2952), this protein is Chorismate synthase.